The chain runs to 250 residues: 5-oxoprolinase subunit A (250 aa).

The protein belongs to the LamB/PxpA family. As to quaternary structure, forms a complex composed of PxpA, PxpB and PxpC.

It catalyses the reaction 5-oxo-L-proline + ATP + 2 H2O = L-glutamate + ADP + phosphate + H(+). Its function is as follows. Catalyzes the cleavage of 5-oxoproline to form L-glutamate coupled to the hydrolysis of ATP to ADP and inorganic phosphate. The polypeptide is 5-oxoprolinase subunit A (Paraburkholderia phymatum (strain DSM 17167 / CIP 108236 / LMG 21445 / STM815) (Burkholderia phymatum)).